Here is a 181-residue protein sequence, read N- to C-terminus: Large ribosomal subunit protein uL5 (181 aa).

The protein belongs to the universal ribosomal protein uL5 family. Part of the 50S ribosomal subunit; part of the 5S rRNA/L5/L18/L25 subcomplex. Contacts the 5S rRNA and the P site tRNA. Forms a bridge to the 30S subunit in the 70S ribosome.

This is one of the proteins that bind and probably mediate the attachment of the 5S RNA into the large ribosomal subunit, where it forms part of the central protuberance. In the 70S ribosome it contacts protein S13 of the 30S subunit (bridge B1b), connecting the 2 subunits; this bridge is implicated in subunit movement. Contacts the P site tRNA; the 5S rRNA and some of its associated proteins might help stabilize positioning of ribosome-bound tRNAs. The sequence is that of Large ribosomal subunit protein uL5 from Sulfurovum sp. (strain NBC37-1).